The chain runs to 316 residues: Ribosomal RNA small subunit methyltransferase H (316 aa).

S-adenosyl-L-methionine contacts are provided by residues 37 to 39 (GGH), D56, F83, D106, and H113. Positions 276–316 (PILPSEEETKENPASRSAKLRVLRKTKSADKKYKKENSKEE) are disordered. Residues 302-316 (KSADKKYKKENSKEE) show a composition bias toward basic and acidic residues.

It belongs to the methyltransferase superfamily. RsmH family.

It localises to the cytoplasm. It catalyses the reaction cytidine(1402) in 16S rRNA + S-adenosyl-L-methionine = N(4)-methylcytidine(1402) in 16S rRNA + S-adenosyl-L-homocysteine + H(+). Its function is as follows. Specifically methylates the N4 position of cytidine in position 1402 (C1402) of 16S rRNA. In Leptospira borgpetersenii serovar Hardjo-bovis (strain JB197), this protein is Ribosomal RNA small subunit methyltransferase H.